Reading from the N-terminus, the 471-residue chain is Actin-related protein 8 (471 aa).

The region spanning 40–86 (LGAFDQLPMDILVQILMMMEPKDAVKLGLTCKAWKCVASGNRLWIFY) is the F-box domain. An ATP-binding site is contributed by 256 to 259 (NIGF).

Belongs to the actin family. Plant ARP8 subfamily. In terms of tissue distribution, ubiquitously expressed in all organs and cell types. Higher expression in seedlings.

It localises to the nucleus. It is found in the nucleolus. Its subcellular location is the cytoplasm. This chain is Actin-related protein 8 (ARP8), found in Arabidopsis thaliana (Mouse-ear cress).